The following is a 149-amino-acid chain: Flagellar assembly factor FliW (149 aa).

This sequence belongs to the FliW family. Interacts with translational regulator CsrA and flagellin(s).

It is found in the cytoplasm. Its function is as follows. Acts as an anti-CsrA protein, binds CsrA and prevents it from repressing translation of its target genes, one of which is flagellin. Binds to flagellin and participates in the assembly of the flagellum. This Thermotoga petrophila (strain ATCC BAA-488 / DSM 13995 / JCM 10881 / RKU-1) protein is Flagellar assembly factor FliW.